The chain runs to 133 residues: P2Y purinoceptor 2 (133 aa).

Topologically, residues 1 to 26 (ISVHRCLGVLRPLHSLRWGRARYARR) are cytoplasmic. A helical membrane pass occupies residues 27 to 47 (VAFAVWVLVLYCQAPVLYFVT). The Extracellular portion of the chain corresponds to 48–74 (TSTRSSRIICHDTSARELFSHFVAYSS). The chain crosses the membrane as a helical span at residues 75-95 (VMLSLLFAAPFAVILVCYVLM). The Cytoplasmic portion of the chain corresponds to 96 to 116 (ARRLLKPAYGTSGGLPRAKRK). A helical transmembrane segment spans residues 117–133 (SVRTIAIVLTVFVLCFL).

This sequence belongs to the G-protein coupled receptor 1 family.

It is found in the cell membrane. Functionally, receptor for ATP and UTP coupled to G-proteins that activate a phosphatidylinositol-calcium second messenger system. In Bos taurus (Bovine), this protein is P2Y purinoceptor 2 (P2RY2).